Consider the following 629-residue polypeptide: Acetylcholinesterase (629 aa).

The signal sequence occupies residues 1–38; sequence MGQLSILCLFVTVCASVCGYSWPSDETTTKPSQFKDFH. An intrachain disulfide couples cysteine 103 to cysteine 130. A glycan (N-linked (GlcNAc...) asparagine) is linked at asparagine 125. Residue serine 253 is the Acyl-ester intermediate of the active site. Cysteine 307 and cysteine 322 form a disulfide bridge. Residue asparagine 308 is glycosylated (N-linked (GlcNAc...) asparagine). The Charge relay system role is filled by glutamate 382. Residue asparagine 418 is glycosylated (N-linked (GlcNAc...) asparagine). Cysteine 458 and cysteine 574 form a disulfide bridge. The active-site Charge relay system is the histidine 496. Asparagine 509 carries an N-linked (GlcNAc...) asparagine glycan. Serine 605 carries GPI-anchor amidated serine lipidation. Residues 606–629 constitute a propeptide, removed in mature form; the sequence is SSNELLPPSTSLVLIWIMTLLNAL.

It belongs to the type-B carboxylesterase/lipase family. As to quaternary structure, homodimer; disulfide-linked. Post-translationally, the N-terminus is blocked.

The protein resides in the synapse. The protein localises to the cell membrane. The enzyme catalyses acetylcholine + H2O = choline + acetate + H(+). In terms of biological role, rapidly hydrolyzes choline released into the synapse. The chain is Acetylcholinesterase from Leptinotarsa decemlineata (Colorado potato beetle).